The primary structure comprises 419 residues: Tol-Pal system protein TolB (419 aa).

A signal peptide spans 1 to 19 (MFNRIISLFLLLFTGQVIA).

The protein belongs to the TolB family. In terms of assembly, the Tol-Pal system is composed of five core proteins: the inner membrane proteins TolA, TolQ and TolR, the periplasmic protein TolB and the outer membrane protein Pal. They form a network linking the inner and outer membranes and the peptidoglycan layer.

Its subcellular location is the periplasm. Part of the Tol-Pal system, which plays a role in outer membrane invagination during cell division and is important for maintaining outer membrane integrity. The sequence is that of Tol-Pal system protein TolB from Legionella pneumophila subsp. pneumophila (strain Philadelphia 1 / ATCC 33152 / DSM 7513).